Reading from the N-terminus, the 757-residue chain is Endonuclease MutS2 (757 aa).

321 to 328 (GPNMGGKT) serves as a coordination point for ATP. Residues 681–756 (IDIRGMTVEE…GTGVTVVEVE (76 aa)) form the Smr domain.

It belongs to the DNA mismatch repair MutS family. MutS2 subfamily. Homodimer. Binds to stalled ribosomes, contacting rRNA.

Functionally, endonuclease that is involved in the suppression of homologous recombination and thus may have a key role in the control of bacterial genetic diversity. In terms of biological role, acts as a ribosome collision sensor, splitting the ribosome into its 2 subunits. Detects stalled/collided 70S ribosomes which it binds and splits by an ATP-hydrolysis driven conformational change. Acts upstream of the ribosome quality control system (RQC), a ribosome-associated complex that mediates the extraction of incompletely synthesized nascent chains from stalled ribosomes and their subsequent degradation. Probably generates substrates for RQC. This chain is Endonuclease MutS2, found in Thermotoga neapolitana (strain ATCC 49049 / DSM 4359 / NBRC 107923 / NS-E).